Consider the following 197-residue polypeptide: Cell division protein SepF (197 aa).

Disordered regions lie at residues 38 to 72 (MPTP…TTPT) and 164 to 197 (LSRE…AQAQ). A compositionally biased stretch (polar residues) spans 58–72 (TVASNFAMNSNTTPT). The span at 170–185 (PATPAAPARPAAPAPA) shows a compositional bias: low complexity.

The protein belongs to the SepF family. Homodimer. Interacts with FtsZ.

The protein localises to the cytoplasm. Functionally, cell division protein that is part of the divisome complex and is recruited early to the Z-ring. Probably stimulates Z-ring formation, perhaps through the cross-linking of FtsZ protofilaments. Its function overlaps with FtsA. This chain is Cell division protein SepF, found in Picosynechococcus sp. (strain ATCC 27264 / PCC 7002 / PR-6) (Agmenellum quadruplicatum).